The chain runs to 78 residues: Translation initiation factor IF-1 (78 aa).

The S1-like domain occupies 2–78; the sequence is SKNNLNETES…TQARITYRFK (77 aa).

It belongs to the IF-1 family. In terms of assembly, component of the 30S ribosomal translation pre-initiation complex which assembles on the 30S ribosome in the order IF-2 and IF-3, IF-1 and N-formylmethionyl-tRNA(fMet); mRNA recruitment can occur at any time during PIC assembly.

The protein resides in the cytoplasm. One of the essential components for the initiation of protein synthesis. Stabilizes the binding of IF-2 and IF-3 on the 30S subunit to which N-formylmethionyl-tRNA(fMet) subsequently binds. Helps modulate mRNA selection, yielding the 30S pre-initiation complex (PIC). Upon addition of the 50S ribosomal subunit IF-1, IF-2 and IF-3 are released leaving the mature 70S translation initiation complex. In Aster yellows witches'-broom phytoplasma (strain AYWB), this protein is Translation initiation factor IF-1.